We begin with the raw amino-acid sequence, 378 residues long: Probable pectin lyase A (378 aa).

The first 18 residues, 1-18 (MKYQDLLAIAGCIANAGA), serve as a signal peptide directing secretion. Cystine bridges form between Cys81–Cys100 and Cys90–Cys224. An N-linked (GlcNAc...) asparagine glycan is attached at Asn127. The active site involves Arg254. Cys321 and Cys329 are disulfide-bonded.

The protein belongs to the polysaccharide lyase 1 family.

Its subcellular location is the secreted. It carries out the reaction Eliminative cleavage of (1-&gt;4)-alpha-D-galacturonan methyl ester to give oligosaccharides with 4-deoxy-6-O-methyl-alpha-D-galact-4-enuronosyl groups at their non-reducing ends.. Functionally, pectinolytic enzymes consist of four classes of enzymes: pectin lyase, polygalacturonase, pectin methylesterase and rhamnogalacturonase. Among pectinolytic enzymes, pectin lyase is the most important in depolymerization of pectin, since it cleaves internal glycosidic bonds of highly methylated pectins. The chain is Probable pectin lyase A (pelA) from Aspergillus fumigatus (strain CBS 144.89 / FGSC A1163 / CEA10) (Neosartorya fumigata).